Reading from the N-terminus, the 288-residue chain is Intermediate transcription factor 3 small subunit (288 aa).

Belongs to the orthopoxvirus OPG134 family. Heterodimer of a 45 kDa (A23R) and a 32 kDa (A8R) subunit to form the virus intermediate transcription factor (VITF)-3.

In terms of biological role, acts with RNA polymerase to initiate transcription from intermediate gene promoters. The polypeptide is Intermediate transcription factor 3 small subunit (OPG134) (Homo sapiens (Human)).